Here is a 745-residue protein sequence, read N- to C-terminus: MATTATRFPQFSQDLASDPTTRRLWYGIATAHDFETHDGMTEERLYQKLFATHFGHLAIIFLWASGNVFHIAWQGNYEQWVANPTGVTPIAHAIWDPQFGKAAVEAFTQPGGGGPVNAAYSGLYYWFNTIGLRTNGDLYAGAIGLLLLAAVFLFAGWLHLQPRFRPSLSWFKNAEARLNHHLAGLFGVSSLAWAGHLVHVAIPESRGQHVGWDNFLTTLPHPAGLKPFFTLNWGVYAQNPDTANHVWGTAEGAGTAILTFLGGFNPNTQSLWLTDMAHHHLAIAVIFIVAGHMYRTNWGIGHSIREILGAHNPPKGTPFGGLLGEGHRGLYDTVNNSLHFQLALALACLGVVTSLVAQHMYALNPYVFMSMDHTTEAALYTHHQYIAGFLMVGAFAHGAIFLVRDYDPEANKNNVLARVLDHKEAIISHLSWVSLFLGFHTLGLYVHNDVMQAFGTPEKQILIEPVFAQFIQASHGKMIYGMDVLLSNPDSIASTAWPNYGNVWLPGWLQAINDPNGFLFLPIGPGDFLVHHAIALGLHTTTLILVKGALDARGSKLMPDKKDFGYSFPCDGPGRGGTCDISAWDAFYLAMFWMLNTIGWVTFYWHWKHLGIWSGNTAQFNENSTYLMGWLRDYLWANSAQLINGYNPYGMNNLAVWAWMFLFGHLVWATGFMFLISWRGYWQELIETLVWAHERTPLANLIRWKDKPVALSIVQGRLVGLAHFTVGYVLTYAAFVIASTASLSG.

A run of 8 helical transmembrane segments spans residues 49 to 72 (LFAT…FHIA), 138 to 161 (LYAG…LHLQ), 178 to 202 (LNHH…HVAI), 276 to 294 (MAHH…GHMY), 338 to 361 (LHFQ…QHMY), 377 to 403 (AALY…IFLV), 425 to 447 (AIIS…LYVH), and 528 to 546 (FLVH…LILV). The [4Fe-4S] cluster site is built by C570 and C579. A run of 2 helical transmembrane segments spans residues 586 to 607 (AFYL…YWHW) and 654 to 676 (LAVW…MFLI). Chlorophyll a contacts are provided by H665, M673, and Y681. Position 682 (W682) interacts with phylloquinone. A helical transmembrane segment spans residues 718-738 (LVGLAHFTVGYVLTYAAFVIA).

It belongs to the PsaA/PsaB family. The PsaA/B heterodimer binds the P700 chlorophyll special pair and subsequent electron acceptors. PSI consists of a core antenna complex that captures photons, and an electron transfer chain that converts photonic excitation into a charge separation. The cyanobacterial PSI reaction center is composed of one copy each of PsaA,B,C,D,E,F,I,J,K,L,M and X, and forms trimeric complexes. The cofactor is PSI electron transfer chain: 5 chlorophyll a, 1 chlorophyll a', 2 phylloquinones and 3 4Fe-4S clusters. PSI core antenna: 90 chlorophyll a, 22 carotenoids, 3 phospholipids and 1 galactolipid. P700 is a chlorophyll a/chlorophyll a' dimer, A0 is one or more chlorophyll a, A1 is one or both phylloquinones and FX is a shared 4Fe-4S iron-sulfur center..

The protein resides in the cellular thylakoid membrane. It catalyses the reaction reduced [plastocyanin] + hnu + oxidized [2Fe-2S]-[ferredoxin] = oxidized [plastocyanin] + reduced [2Fe-2S]-[ferredoxin]. In terms of biological role, psaA and PsaB bind P700, the primary electron donor of photosystem I (PSI), as well as the electron acceptors A0, A1 and FX. PSI is a plastocyanin/cytochrome c6-ferredoxin oxidoreductase, converting photonic excitation into a charge separation, which transfers an electron from the donor P700 chlorophyll pair to the spectroscopically characterized acceptors A0, A1, FX, FA and FB in turn. Oxidized P700 is reduced on the lumenal side of the thylakoid membrane by plastocyanin or cytochrome c6. This is Photosystem I P700 chlorophyll a apoprotein A2 from Synechococcus sp. (strain JA-3-3Ab) (Cyanobacteria bacterium Yellowstone A-Prime).